The primary structure comprises 296 residues: Diguanylate cyclase DgcZ (296 aa).

Zn(2+) contacts are provided by histidine 22, cysteine 52, histidine 79, and histidine 83. A GGDEF domain is found at 157–289; that stretch reads LNLYLMLLDI…GRNRCMFIDE (133 aa). The Mg(2+) site is built by aspartate 165 and isoleucine 166. Residues asparagine 173, histidine 178, aspartate 182, and 195–200 contribute to the substrate site; that span reads WTRDYE. Glutamate 208 lines the Mg(2+) pocket. Catalysis depends on glutamate 208, which acts as the Proton acceptor. Substrate contacts are provided by lysine 215, arginine 224, and arginine 228.

As to quaternary structure, homodimer. The cofactor is Mg(2+).

It catalyses the reaction 2 GTP = 3',3'-c-di-GMP + 2 diphosphate. Its pathway is purine metabolism; 3',5'-cyclic di-GMP biosynthesis. With respect to regulation, allosterically regulated by zinc, which seems to regulate the activity of the catalytic GGDEF domains by impeding their mobility and thus preventing productive encounter of the two GTP substrates. Subject to product inhibition by c-di-GMP at a KI of 44 uM. In terms of biological role, catalyzes the synthesis of cyclic-di-GMP (c-di-GMP) via the condensation of 2 GTP molecules. May act as a zinc sensor that controls, via c-di-GMP, post-translational events. Overexpression leads to a strong repression of swimming; swimming returnes to normal when residues 206-207 are both mutated to Ala. Overexpression also leads to a reduction in flagellar abundance and a 20-fold increase in c-di-GMP levels in vivo. Required for aminoglycoside-mediated induction of biofilm formation, it also plays a lesser role in biofilm production in response to other classes of translation inhibitors. The c-di-GMP produced by this enzyme up-regulates poly-GlcNAc production as well as the biofilm synthesis protein PgaD, although c-di-GMP is probably not the main inducing principle. C-di-GMP is a second messenger which controls cell surface-associated traits in bacteria. The protein is Diguanylate cyclase DgcZ of Escherichia coli (strain K12).